The primary structure comprises 177 residues: SKP1-like protein 15 (177 aa).

The segment at 108–167 is interaction with the F-box domain of F-box proteins; the sequence is ILAANYLNVEGLLGLTCQTVADYIKDKTPEEVRELFNIENDFTHEEEEEAIRKENAWAFE.

This sequence belongs to the SKP1 family. Part of a SCF (SKP1-cullin-F-box) protein ligase complex. As to expression, expressed at low levels in seedlings and leaves.

It is found in the nucleus. It functions in the pathway protein modification; protein ubiquitination. Its function is as follows. Involved in ubiquitination and subsequent proteasomal degradation of target proteins. Together with CUL1, RBX1 and a F-box protein, it forms a SCF E3 ubiquitin ligase complex. The functional specificity of this complex depends on the type of F-box protein. In the SCF complex, it serves as an adapter that links the F-box protein to CUL1. The protein is SKP1-like protein 15 (ASK15) of Arabidopsis thaliana (Mouse-ear cress).